A 609-amino-acid chain; its full sequence is tRNA 5-methylaminomethyl-2-thiouridine biosynthesis bifunctional protein MnmC (609 aa).

A tRNA (mnm(5)s(2)U34)-methyltransferase region spans residues M1–M229. Residues I237–P609 form an FAD-dependent cmnm(5)s(2)U34 oxidoreductase region.

It in the N-terminal section; belongs to the methyltransferase superfamily. tRNA (mnm(5)s(2)U34)-methyltransferase family. In the C-terminal section; belongs to the DAO family. It depends on FAD as a cofactor.

The protein localises to the cytoplasm. It catalyses the reaction 5-aminomethyl-2-thiouridine(34) in tRNA + S-adenosyl-L-methionine = 5-methylaminomethyl-2-thiouridine(34) in tRNA + S-adenosyl-L-homocysteine + H(+). Functionally, catalyzes the last two steps in the biosynthesis of 5-methylaminomethyl-2-thiouridine (mnm(5)s(2)U) at the wobble position (U34) in tRNA. Catalyzes the FAD-dependent demodification of cmnm(5)s(2)U34 to nm(5)s(2)U34, followed by the transfer of a methyl group from S-adenosyl-L-methionine to nm(5)s(2)U34, to form mnm(5)s(2)U34. The polypeptide is tRNA 5-methylaminomethyl-2-thiouridine biosynthesis bifunctional protein MnmC (mnmC) (Albidiferax ferrireducens (strain ATCC BAA-621 / DSM 15236 / T118) (Rhodoferax ferrireducens)).